The sequence spans 938 residues: Bifunctional glutamine synthetase adenylyltransferase/adenylyl-removing enzyme (938 aa).

Residues 1 to 457 (MLEADAARLK…HFDHVFGDPS (457 aa)) are adenylyl removase. The adenylyl transferase stretch occupies residues 460–938 (AHTLDSMWAA…ALWTIVFGSA (479 aa)).

The protein belongs to the GlnE family. The cofactor is Mg(2+).

It catalyses the reaction [glutamine synthetase]-O(4)-(5'-adenylyl)-L-tyrosine + phosphate = [glutamine synthetase]-L-tyrosine + ADP. The catalysed reaction is [glutamine synthetase]-L-tyrosine + ATP = [glutamine synthetase]-O(4)-(5'-adenylyl)-L-tyrosine + diphosphate. Functionally, involved in the regulation of glutamine synthetase GlnA, a key enzyme in the process to assimilate ammonia. When cellular nitrogen levels are high, the C-terminal adenylyl transferase (AT) inactivates GlnA by covalent transfer of an adenylyl group from ATP to specific tyrosine residue of GlnA, thus reducing its activity. Conversely, when nitrogen levels are low, the N-terminal adenylyl removase (AR) activates GlnA by removing the adenylyl group by phosphorolysis, increasing its activity. The regulatory region of GlnE binds the signal transduction protein PII (GlnB) which indicates the nitrogen status of the cell. This chain is Bifunctional glutamine synthetase adenylyltransferase/adenylyl-removing enzyme, found in Aromatoleum aromaticum (strain DSM 19018 / LMG 30748 / EbN1) (Azoarcus sp. (strain EbN1)).